The sequence spans 194 residues: Molybdenum cofactor guanylyltransferase (194 aa).

GTP-binding positions include 12 to 14 (LAG), Lys25, Asn53, Asp70, and Asp100. Residue Asp100 participates in Mg(2+) binding.

Belongs to the MobA family. Monomer. Mg(2+) is required as a cofactor.

It localises to the cytoplasm. It carries out the reaction Mo-molybdopterin + GTP + H(+) = Mo-molybdopterin guanine dinucleotide + diphosphate. In terms of biological role, transfers a GMP moiety from GTP to Mo-molybdopterin (Mo-MPT) cofactor (Moco or molybdenum cofactor) to form Mo-molybdopterin guanine dinucleotide (Mo-MGD) cofactor. This chain is Molybdenum cofactor guanylyltransferase, found in Photobacterium profundum (strain SS9).